A 458-amino-acid chain; its full sequence is Probable alpha-L-glutamate ligase (458 aa).

A unknown region spans residues 1 to 162; it reads MSDNKFIIGS…YGVKSAKKSG (162 aa). The interval 163 to 458 is alpha-L-glutamate ligase; it reads LKIGLLASNP…IEKKLGWKAE (296 aa). Residues 267–450 enclose the ATP-grasp domain; it reads LQLLQKNNLD…IAGAMIDSIE (184 aa). ATP-binding positions include lysine 304, 341-342, aspartate 350, and 374-376; these read EF and RAN. Residues aspartate 411, glutamate 423, and asparagine 425 each coordinate Mg(2+). Mn(2+) is bound by residues aspartate 411, glutamate 423, and asparagine 425.

This sequence in the C-terminal section; belongs to the RimK family. Mg(2+) serves as cofactor. Requires Mn(2+) as cofactor.

The sequence is that of Probable alpha-L-glutamate ligase from Shewanella halifaxensis (strain HAW-EB4).